Here is a 311-residue protein sequence, read N- to C-terminus: Mitochondrial ribosome-associated GTPase 1 (311 aa).

The 174-residue stretch at 27 to 200 folds into the CP-type G domain; it reads AKGLKQMKTK…LFDTPGVLSP (174 aa). Residues 74-77, 144-149, and Gly196 each bind GTP; these read NKMD and NVGKSS.

This sequence belongs to the TRAFAC class YlqF/YawG GTPase family. MTG1 subfamily.

It localises to the mitochondrion inner membrane. Plays a role in the regulation of the mitochondrial ribosome assembly and of translational activity. Displays mitochondrial GTPase activity. This is Mitochondrial ribosome-associated GTPase 1 from Xenopus tropicalis (Western clawed frog).